We begin with the raw amino-acid sequence, 447 residues long: Serine/threonine-protein phosphatase 2A 55 kDa regulatory subunit B gamma isoform (447 aa).

WD repeat units follow at residues 22–61, 87–128, 171–209, 220–260, 279–317, 334–375, and 410–446; these read TEADIISTVEFNHTGELLATGDKGGRVVIFQREPESKNAP, EIEE…KRPE, GHTYHINSISVNSDCETYMSADDLRINLWHLAITDRSFN, DLTE…LCDK, EIISSVSDVKFSHSGRYMLTRDYLTVKVWDLNMEARPIE, ENDC…DVTL, and DFTKKILHTAWHPAENIIAIAATNNLYIFQDKVNSDM.

The protein belongs to the phosphatase 2A regulatory subunit B family. As to quaternary structure, PP2A consists of a common heterodimeric core enzyme, composed of a 36 kDa catalytic subunit (subunit C) and a 65 kDa constant regulatory subunit (PR65 or subunit A), that associates with a variety of regulatory subunits. Proteins that associate with the core dimer include three families of regulatory subunits B (the R2/B/PR55/B55, R3/B''/PR72/PR130/PR59 and R5/B'/B56 families), the 48 kDa variable regulatory subunit, viral proteins, and cell signaling molecules. Interacts with IER5.

The B regulatory subunit might modulate substrate selectivity and catalytic activity, and might also direct the localization of the catalytic enzyme to a particular subcellular compartment. In Homo sapiens (Human), this protein is Serine/threonine-protein phosphatase 2A 55 kDa regulatory subunit B gamma isoform (PPP2R2C).